Here is a 155-residue protein sequence, read N- to C-terminus: Photosystem I reaction center subunit XI (155 aa).

2 consecutive transmembrane segments (helical) span residues 80 to 102 (LISG…LVSF) and 117 to 139 (GWSQ…AFFL).

Belongs to the PsaL family.

The protein localises to the cellular thylakoid membrane. This chain is Photosystem I reaction center subunit XI, found in Thermosynechococcus vestitus (strain NIES-2133 / IAM M-273 / BP-1).